A 227-amino-acid chain; its full sequence is Cytochrome c oxidase subunit 2 (227 aa).

Over 1 to 14 (MAHPVQLGLQDATS) the chain is Mitochondrial intermembrane. A helical membrane pass occupies residues 15 to 45 (PVMEELITFHDYALMTISLISFLVLYALFST). The Mitochondrial matrix segment spans residues 46–59 (LTTKLTNTNITDAQ). The chain crosses the membrane as a helical span at residues 60–87 (EMETTWTILPAVILILIALPSLRILYLT). Residues 88–227 (DEINNPSFTI…IFEMGPVFTL (140 aa)) lie on the Mitochondrial intermembrane side of the membrane. 6 residues coordinate Cu cation: histidine 161, cysteine 196, glutamate 198, cysteine 200, histidine 204, and methionine 207. A Mg(2+)-binding site is contributed by glutamate 198.

The protein belongs to the cytochrome c oxidase subunit 2 family. Component of the cytochrome c oxidase (complex IV, CIV), a multisubunit enzyme composed of 14 subunits. The complex is composed of a catalytic core of 3 subunits MT-CO1, MT-CO2 and MT-CO3, encoded in the mitochondrial DNA, and 11 supernumerary subunits COX4I, COX5A, COX5B, COX6A, COX6B, COX6C, COX7A, COX7B, COX7C, COX8 and NDUFA4, which are encoded in the nuclear genome. The complex exists as a monomer or a dimer and forms supercomplexes (SCs) in the inner mitochondrial membrane with NADH-ubiquinone oxidoreductase (complex I, CI) and ubiquinol-cytochrome c oxidoreductase (cytochrome b-c1 complex, complex III, CIII), resulting in different assemblies (supercomplex SCI(1)III(2)IV(1) and megacomplex MCI(2)III(2)IV(2)). Found in a complex with TMEM177, COA6, COX18, COX20, SCO1 and SCO2. Interacts with TMEM177 in a COX20-dependent manner. Interacts with COX20. Interacts with COX16. It depends on Cu cation as a cofactor.

It localises to the mitochondrion inner membrane. The enzyme catalyses 4 Fe(II)-[cytochrome c] + O2 + 8 H(+)(in) = 4 Fe(III)-[cytochrome c] + 2 H2O + 4 H(+)(out). In terms of biological role, component of the cytochrome c oxidase, the last enzyme in the mitochondrial electron transport chain which drives oxidative phosphorylation. The respiratory chain contains 3 multisubunit complexes succinate dehydrogenase (complex II, CII), ubiquinol-cytochrome c oxidoreductase (cytochrome b-c1 complex, complex III, CIII) and cytochrome c oxidase (complex IV, CIV), that cooperate to transfer electrons derived from NADH and succinate to molecular oxygen, creating an electrochemical gradient over the inner membrane that drives transmembrane transport and the ATP synthase. Cytochrome c oxidase is the component of the respiratory chain that catalyzes the reduction of oxygen to water. Electrons originating from reduced cytochrome c in the intermembrane space (IMS) are transferred via the dinuclear copper A center (CU(A)) of subunit 2 and heme A of subunit 1 to the active site in subunit 1, a binuclear center (BNC) formed by heme A3 and copper B (CU(B)). The BNC reduces molecular oxygen to 2 water molecules using 4 electrons from cytochrome c in the IMS and 4 protons from the mitochondrial matrix. This Chlorocebus aethiops (Green monkey) protein is Cytochrome c oxidase subunit 2 (MT-CO2).